The primary structure comprises 294 residues: ATP synthase gamma chain (294 aa).

It belongs to the ATPase gamma chain family. As to quaternary structure, F-type ATPases have 2 components, CF(1) - the catalytic core - and CF(0) - the membrane proton channel. CF(1) has five subunits: alpha(3), beta(3), gamma(1), delta(1), epsilon(1). CF(0) has three main subunits: a, b and c.

The protein resides in the cell inner membrane. Produces ATP from ADP in the presence of a proton gradient across the membrane. The gamma chain is believed to be important in regulating ATPase activity and the flow of protons through the CF(0) complex. This chain is ATP synthase gamma chain, found in Caulobacter sp. (strain K31).